Consider the following 194-residue polypeptide: CASP-like protein 4C1 (194 aa).

The Cytoplasmic segment spans residues 1–35; it reads MRSPHAFRNGESPTLRDHTHFHSTVTAQKLRRFNS. A helical transmembrane segment spans residues 36–56; the sequence is LILLLRLASFSFSLASAVFML. Residues 57–74 lie on the Extracellular side of the membrane; it reads TNSRGSASPHWYDFDAFR. A helical membrane pass occupies residues 75-95; the sequence is FVFVANAIVALYSVFEMGTCV. Over 96 to 114 the chain is Cytoplasmic; that stretch reads WEFSRETTLWPEAFQVWFD. The helical transmembrane segment at 115-135 threads the bilayer; it reads FGHDQVFSYLLLSAGSAAAAL. Topologically, residues 136–157 are extracellular; the sequence is ARTMRGGDTCTANKAFCLQSDV. Residues 158–178 traverse the membrane as a helical segment; the sequence is AIGLGFAAFLFLAFSSCFSGF. Topologically, residues 179-194 are cytoplasmic; the sequence is RVACFLITGSRFHLYS.

The protein belongs to the Casparian strip membrane proteins (CASP) family. In terms of assembly, homodimer and heterodimers.

The protein resides in the cell membrane. The polypeptide is CASP-like protein 4C1 (Arabidopsis thaliana (Mouse-ear cress)).